The following is a 288-amino-acid chain: Probable endonuclease 4 (288 aa).

Residues His-75, His-115, Glu-153, Asp-187, His-190, His-224, Asp-237, His-239, and Glu-269 each coordinate Zn(2+).

The protein belongs to the AP endonuclease 2 family. Zn(2+) serves as cofactor.

The enzyme catalyses Endonucleolytic cleavage to 5'-phosphooligonucleotide end-products.. Its function is as follows. Endonuclease IV plays a role in DNA repair. It cleaves phosphodiester bonds at apurinic or apyrimidinic (AP) sites, generating a 3'-hydroxyl group and a 5'-terminal sugar phosphate. This is Probable endonuclease 4 from Chlamydia trachomatis serovar A (strain ATCC VR-571B / DSM 19440 / HAR-13).